Reading from the N-terminus, the 604-residue chain is 2-isopropylmalate synthase 2, mitochondrial (604 aa).

The N-terminal 50 residues, 1 to 50, are a transit peptide targeting the mitochondrion; sequence MVKHSFIALAEHASKLRRSIPPVKLTYKNMLRDPSVKYRAFAPPKMVKRI. A Pyruvate carboxyltransferase domain is found at 60–335; the sequence is PRWLSTDLRD…SPNLDFSDLT (276 aa). Positions 69, 274, 276, and 310 each coordinate a divalent metal cation.

The protein belongs to the alpha-IPM synthase/homocitrate synthase family. LeuA type 2 subfamily. Homodimer. The cofactor is a divalent metal cation.

It localises to the mitochondrion. It catalyses the reaction 3-methyl-2-oxobutanoate + acetyl-CoA + H2O = (2S)-2-isopropylmalate + CoA + H(+). It participates in amino-acid biosynthesis; L-leucine biosynthesis; L-leucine from 3-methyl-2-oxobutanoate: step 1/4. In terms of biological role, catalyzes the condensation of the acetyl group of acetyl-CoA with 3-methyl-2-oxobutanoate (2-oxoisovalerate) to form 3-carboxy-3-hydroxy-4-methylpentanoate (2-isopropylmalate). Redundant to LEU4, responsible for about 20% of alpha-IPMS activity. Involved in leucine synthesis. The chain is 2-isopropylmalate synthase 2, mitochondrial from Saccharomyces cerevisiae (strain ATCC 204508 / S288c) (Baker's yeast).